Here is a 361-residue protein sequence, read N- to C-terminus: Inhibin alpha chain (361 aa).

An N-terminal signal peptide occupies residues 1–21 (MLPLLLPLQLLLLMVMKGGHG). The propeptide occupies 22 to 64 (CQGPELDRELVLAKVRALVLDALGPPNASKDGGKPVAQRLTRR). Positions 45 to 82 (GPPNASKDGGKPVAQRLTRRHAHTGGSTRRSMENEDED) are disordered. N-linked (GlcNAc...) asparagine glycans are attached at residues Asn48, Asn144, and Asn266. A propeptide spans 65–230 (HAHTGGSTRR…PPSVGERARR (166 aa)) (inhibin alpha N-terminal region). 3 disulfides stabilise this stretch: Cys260/Cys323, Cys289/Cys358, and Cys293/Cys360.

It belongs to the TGF-beta family. Dimeric, linked by one or more disulfide bonds. Activin B is a dimer of alpha and beta-B. Inhibin A is a dimer of alpha and beta-A. Inhibin B is a dimer of alpha and beta-B. Interacts with TGFBR3L; this interaction regulates female fertility. Post-translationally, proteolytic processing yields a number of bioactive forms, consisting either solely of the mature alpha chain, of the most N-terminal propeptide linked through a disulfide bond to the mature alpha chain, or of the entire proprotein.

The protein resides in the secreted. Functionally, inhibins and activins inhibit and activate, respectively, the secretion of follitropin by the pituitary gland. Inhibins/activins are involved in regulating a number of diverse functions such as hypothalamic and pituitary hormone secretion, gonadal hormone secretion, germ cell development and maturation, erythroid differentiation, insulin secretion, nerve cell survival, embryonic axial development or bone growth, depending on their subunit composition. Inhibins appear to oppose the functions of activins. In terms of biological role, inhibin A is a dimer of alpha/INHA and beta-A/INHBA that functions as a feedback regulator in the hypothalamic-pituitary-gonadal (HPG) axis. Inhibits the secretion of FSH from the anterior pituitary gland by acting on pituitary gonadotrope cells. Antagonizes activin A by binding to the proteoglycan, betaglycan, and forming a stable complex with and, thereby, sequestering type II activin receptors while excluding type I receptor. Inhibin B is a dimer of alpha and beta-B that plays a crucial role in the regulation of the reproductive system by inhibiting the secretion of follicle-stimulating hormone (FSH) from the anterior pituitary gland. Thereby, maintains reproductive homeostasis in both males and females. Acts as a more potent suppressor of FSH release than inhibin A. Functions as competitive receptor antagonist binding activin type II receptors with high affinity in the presence of the TGF-beta type III coreceptor/TGFBR3L. The chain is Inhibin alpha chain (INHA) from Trichosurus vulpecula (Brush-tailed possum).